Consider the following 442-residue polypeptide: Proline--tRNA ligase (442 aa).

The protein belongs to the class-II aminoacyl-tRNA synthetase family. ProS type 2 subfamily. In terms of assembly, homodimer.

The protein localises to the cytoplasm. It catalyses the reaction tRNA(Pro) + L-proline + ATP = L-prolyl-tRNA(Pro) + AMP + diphosphate. In terms of biological role, catalyzes the attachment of proline to tRNA(Pro) in a two-step reaction: proline is first activated by ATP to form Pro-AMP and then transferred to the acceptor end of tRNA(Pro). This Brucella abortus (strain S19) protein is Proline--tRNA ligase.